A 215-amino-acid chain; its full sequence is Adenylate kinase (215 aa).

10–15 (GTGKGT) serves as a coordination point for ATP. The interval 30–59 (STGHILRKISTKKTLFGEKIKNIINSGKLV) is NMP. AMP is bound by residues threonine 31, arginine 36, 57–59 (KLV), 85–88 (GFPR), and glutamine 92. Residues 122–157 (TRTINPITGTIYNNVIQKNSELKNLKINTLKSRLDD) form an LID region. Residues arginine 123 and 132-133 (IY) contribute to the ATP site. 2 residues coordinate AMP: arginine 154 and arginine 165. Asparagine 198 lines the ATP pocket.

This sequence belongs to the adenylate kinase family. In terms of assembly, monomer.

It localises to the cytoplasm. It carries out the reaction AMP + ATP = 2 ADP. The protein operates within purine metabolism; AMP biosynthesis via salvage pathway; AMP from ADP: step 1/1. In terms of biological role, catalyzes the reversible transfer of the terminal phosphate group between ATP and AMP. Plays an important role in cellular energy homeostasis and in adenine nucleotide metabolism. The protein is Adenylate kinase of Buchnera aphidicola subsp. Baizongia pistaciae (strain Bp).